The following is a 130-amino-acid chain: Phosphomevalonate dehydratase small subunit (130 aa).

S62 (proton acceptor) is an active-site residue.

This sequence belongs to the AcnX type II small subunit family. As to quaternary structure, heterodimer composed of a large subunit (PMDh-L) and a small subunit (PMDh-S).

The enzyme catalyses (R)-5-phosphomevalonate = (2E)-3-methyl-5-phosphooxypent-2-enoate + H2O. It participates in isoprenoid biosynthesis; isopentenyl diphosphate biosynthesis via mevalonate pathway. Functionally, component of a hydro-lyase that catalyzes the dehydration of mevalonate 5-phosphate (MVA5P) to form trans-anhydromevalonate 5-phosphate (tAHMP). Involved in the archaeal mevalonate (MVA) pathway, which provides fundamental precursors for isoprenoid biosynthesis, such as isopentenyl diphosphate (IPP) and dimethylallyl diphosphate (DMAPP). The protein is Phosphomevalonate dehydratase small subunit of Thermococcus sibiricus (strain DSM 12597 / MM 739).